The sequence spans 1649 residues: Cortactin-binding protein 2 (1649 aa).

The interval 1 to 23 is disordered; the sequence is MATDGASCEPDLSRAPEDAAGAA. Residues 119–276 are a coiled coil; it reads RKMQERMSAQ…EQLKRGSDSK (158 aa). Disordered stretches follow at residues 366–440 and 454–478; these read IGVS…LHPG and GNANDPDQNGNTTQSPPSRDVSPTS. 2 stretches are compositionally biased toward low complexity: residues 368–379 and 386–396; these read VSVPAFPPSSAS and PSTGSTPDPTS. Over residues 411–422 the composition is skewed to polar residues; that stretch reads QTPGITPQNSQA. An Asymmetric dimethylarginine modification is found at Arg498. The interval 499–616 is disordered; it reads FTGPQAGAPP…SSPQLPPKPS (118 aa). Residues 583-593 show a composition bias toward polar residues; the sequence is TVASPPSSLPQ. ANK repeat units follow at residues 709-739, 743-772, 776-805, 809-838, and 842-871; these read GRPTLLQQAAAQGNVTLLSMLLNEEGLDINY, DGHSALYSAAKNGHTDCVRLLLSAEAQVNA, NGFTPLCAAAAQGHFKCVELLIAYDANINH, GGQTPLYLACKNGNKECIKLLLEAGTDRSV, and DGWTPVHAAVDTGNVDSLKLLMYHRVPAHG. The disordered stretch occupies residues 872 to 897; the sequence is NSFSEEESESGVFDLDGGEESPEGKS. The ANK 6 repeat unit spans residues 912–942; sequence EGWTAAHIAASKGFKNCLEILCRHGGLETER. The segment at 1444–1482 is disordered; that stretch reads SCSKKKGESGAWRRVNTSPRRKSSRFSLPTWNKPDLSNE. Ser1524 is subject to Phosphoserine. Residues 1616-1649 form a disordered region; sequence PRSKVTQCSQNTKRSSSSSNTRQIEINNNSKEEN. Residues 1624-1638 are compositionally biased toward low complexity; sequence SQNTKRSSSSSNTRQ. Positions 1639–1649 are enriched in polar residues; the sequence is IEINNNSKEEN.

Interacts with CTTN/cortactin SH3 domain. Interacts with STRN, STRN4/zinedin and MOB4/phocein; this interactions mediate the association with the STRIPAK core complex and may regulate dendritic spine distribution of the STRIPAK complex in hippocampal neurons. Activation of glutamate receptors weakens the interaction with STRN and STRN4.

Its subcellular location is the cytoplasm. It localises to the cell cortex. It is found in the cell projection. The protein resides in the dendritic spine. Functionally, regulates the dendritic spine distribution of CTTN/cortactin in hippocampal neurons, and thus controls dendritic spinogenesis and dendritic spine maintenance. Associates with the striatin-interacting phosphatase and kinase (STRIPAK) core complex to regulate dendritic spine distribution of the STRIPAK complex in hippocampal neurons. This Aotus nancymaae (Ma's night monkey) protein is Cortactin-binding protein 2 (CTTNBP2).